We begin with the raw amino-acid sequence, 320 residues long: o-succinylbenzoate synthase (320 aa).

The active-site Proton donor is Lys133. Positions 161, 190, and 213 each coordinate Mg(2+). Lys235 acts as the Proton acceptor in catalysis.

Belongs to the mandelate racemase/muconate lactonizing enzyme family. MenC type 1 subfamily. A divalent metal cation serves as cofactor.

The enzyme catalyses (1R,6R)-6-hydroxy-2-succinyl-cyclohexa-2,4-diene-1-carboxylate = 2-succinylbenzoate + H2O. Its pathway is quinol/quinone metabolism; 1,4-dihydroxy-2-naphthoate biosynthesis; 1,4-dihydroxy-2-naphthoate from chorismate: step 4/7. The protein operates within quinol/quinone metabolism; menaquinone biosynthesis. In terms of biological role, converts 2-succinyl-6-hydroxy-2,4-cyclohexadiene-1-carboxylate (SHCHC) to 2-succinylbenzoate (OSB). The chain is o-succinylbenzoate synthase from Escherichia fergusonii (strain ATCC 35469 / DSM 13698 / CCUG 18766 / IAM 14443 / JCM 21226 / LMG 7866 / NBRC 102419 / NCTC 12128 / CDC 0568-73).